The chain runs to 285 residues: Ribosomal RNA small subunit methyltransferase A (285 aa).

Residues N30, L32, G57, E78, D101, and N121 each contribute to the S-adenosyl-L-methionine site.

Belongs to the class I-like SAM-binding methyltransferase superfamily. rRNA adenine N(6)-methyltransferase family. RsmA subfamily.

It localises to the cytoplasm. The enzyme catalyses adenosine(1518)/adenosine(1519) in 16S rRNA + 4 S-adenosyl-L-methionine = N(6)-dimethyladenosine(1518)/N(6)-dimethyladenosine(1519) in 16S rRNA + 4 S-adenosyl-L-homocysteine + 4 H(+). Specifically dimethylates two adjacent adenosines (A1518 and A1519) in the loop of a conserved hairpin near the 3'-end of 16S rRNA in the 30S particle. May play a critical role in biogenesis of 30S subunits. The polypeptide is Ribosomal RNA small subunit methyltransferase A (Treponema pallidum (strain Nichols)).